A 161-amino-acid polypeptide reads, in one-letter code: Nucleotide-binding protein SAR11_0692 (161 aa).

It belongs to the YajQ family.

Nucleotide-binding protein. The protein is Nucleotide-binding protein SAR11_0692 of Pelagibacter ubique (strain HTCC1062).